We begin with the raw amino-acid sequence, 606 residues long: Granule-bound starch synthase 1, chloroplastic/amyloplastic (606 aa).

Residues 1–76 (MSALTTSQLA…GSRRFPSVVV (76 aa)) constitute a chloroplast transit peptide. The segment at 29–67 (RHGFQGLKPRSPAGGDASSLSVTTSARATPKQQRSVQRG) is disordered. A compositionally biased stretch (polar residues) spans 46–66 (SSLSVTTSARATPKQQRSVQR). Lysine 97 is an ADP-alpha-D-glucose binding site.

The protein belongs to the glycosyltransferase 1 family. Bacterial/plant glycogen synthase subfamily.

The protein localises to the plastid. The protein resides in the chloroplast. It localises to the amyloplast. It carries out the reaction an NDP-alpha-D-glucose + [(1-&gt;4)-alpha-D-glucosyl](n) = [(1-&gt;4)-alpha-D-glucosyl](n+1) + a ribonucleoside 5'-diphosphate + H(+). Its pathway is glycan biosynthesis; starch biosynthesis. Functionally, required for the synthesis of amylose in endosperm. This Oryza sativa (Rice) protein is Granule-bound starch synthase 1, chloroplastic/amyloplastic (WAXY).